The sequence spans 1183 residues: DNA-directed RNA polymerase subunit beta (1183 aa).

This sequence belongs to the RNA polymerase beta chain family. In terms of assembly, the RNAP catalytic core consists of 2 alpha, 1 beta, 1 beta' and 1 omega subunit. When a sigma factor is associated with the core the holoenzyme is formed, which can initiate transcription.

The enzyme catalyses RNA(n) + a ribonucleoside 5'-triphosphate = RNA(n+1) + diphosphate. DNA-dependent RNA polymerase catalyzes the transcription of DNA into RNA using the four ribonucleoside triphosphates as substrates. This Staphylococcus aureus (strain Mu3 / ATCC 700698) protein is DNA-directed RNA polymerase subunit beta.